A 379-amino-acid chain; its full sequence is Cytochrome b (379 aa).

4 consecutive transmembrane segments (helical) span residues 33–53, 77–98, 113–133, and 178–198; these read FGSLLGMCLMIQILTGLFLAM, WLIRYLHANGASMFFICLFIHV, WNIGIILFFTTMATAFVGYVL, and FFAFHFILPFIITAFVLVHLL. 2 residues coordinate heme b: His-83 and His-97. Heme b contacts are provided by His-182 and His-196. Residue His-201 coordinates a ubiquinone. The next 4 membrane-spanning stretches (helical) occupy residues 226-246, 288-308, 320-340, and 347-367; these read IKDLLGILFLLMALMILALFF, LGGVLALLLSILILMAFPLLN, ITQIIYWILIANLLVLTWIGG, and FTMIGQIASITYFTIILILMP.

Belongs to the cytochrome b family. As to quaternary structure, the cytochrome bc1 complex contains 11 subunits: 3 respiratory subunits (MT-CYB, CYC1 and UQCRFS1), 2 core proteins (UQCRC1 and UQCRC2) and 6 low-molecular weight proteins (UQCRH/QCR6, UQCRB/QCR7, UQCRQ/QCR8, UQCR10/QCR9, UQCR11/QCR10 and a cleavage product of UQCRFS1). This cytochrome bc1 complex then forms a dimer. It depends on heme b as a cofactor.

The protein localises to the mitochondrion inner membrane. Functionally, component of the ubiquinol-cytochrome c reductase complex (complex III or cytochrome b-c1 complex) that is part of the mitochondrial respiratory chain. The b-c1 complex mediates electron transfer from ubiquinol to cytochrome c. Contributes to the generation of a proton gradient across the mitochondrial membrane that is then used for ATP synthesis. This Akodon dayi (Day's grass mouse) protein is Cytochrome b (MT-CYB).